A 672-amino-acid chain; its full sequence is Flap endonuclease 1 (672 aa).

Residues 1-106 are N-domain; that stretch reads MGIKGLIGFL…QTLAKRKLLR (106 aa). Position 34 (Asp-34) interacts with Mg(2+). DNA is bound by residues Arg-47 and Arg-72. 5 residues coordinate Mg(2+): Asp-88, Glu-160, Glu-162, Asp-181, and Asp-183. The segment at 124–252 is I-domain; the sequence is AIRKYVGRTV…KTAYNLIKKH (129 aa). Residue Glu-160 participates in DNA binding. Residues Gly-230 and Asp-232 each contribute to the DNA site. Asp-232 lines the Mg(2+) pocket. Residues 327–335 form an interaction with PCNA region; sequence TQLSLKSFF. The interval 361–436 is disordered; sequence VESAVDSTSD…DAKKRNKRVP (76 aa). The span at 370–382 shows a compositional bias: basic and acidic residues; sequence DDGKDEVPSDDKV.

Belongs to the XPG/RAD2 endonuclease family. FEN1 subfamily. Interacts with PCNA. Three molecules of FEN1 bind to one PCNA trimer with each molecule binding to one PCNA monomer. PCNA stimulates the nuclease activity without altering cleavage specificity. The cofactor is Mg(2+). Phosphorylated. Phosphorylation upon DNA damage induces relocalization to the nuclear plasma.

It is found in the nucleus. Its subcellular location is the nucleolus. It localises to the nucleoplasm. The protein resides in the mitochondrion. Structure-specific nuclease with 5'-flap endonuclease and 5'-3' exonuclease activities involved in DNA replication and repair. During DNA replication, cleaves the 5'-overhanging flap structure that is generated by displacement synthesis when DNA polymerase encounters the 5'-end of a downstream Okazaki fragment. It enters the flap from the 5'-end and then tracks to cleave the flap base, leaving a nick for ligation. Also involved in the long patch base excision repair (LP-BER) pathway, by cleaving within the apurinic/apyrimidinic (AP) site-terminated flap. Acts as a genome stabilization factor that prevents flaps from equilibrating into structures that lead to duplications and deletions. Also possesses 5'-3' exonuclease activity on nicked or gapped double-stranded DNA, and exhibits RNase H activity. Also involved in replication and repair of rDNA and in repairing mitochondrial DNA. The polypeptide is Flap endonuclease 1 (Babesia bovis).